The primary structure comprises 90 residues: Probable oxaloacetate decarboxylase gamma chain 2 (90 aa).

A helical membrane pass occupies residues 10–32; it reads GINLLTLGMGFVFIFLIFLVYAT.

This sequence belongs to the OadG family. As to quaternary structure, heterotrimer of an alpha, a beta and a gamma subunit. The cofactor is Na(+).

It localises to the cell membrane. The enzyme catalyses oxaloacetate + 2 Na(+)(in) + H(+) = pyruvate + 2 Na(+)(out) + CO2. Its function is as follows. Catalyzes the decarboxylation of oxaloacetate coupled to Na(+) translocation. In Vibrio cholerae serotype O1 (strain ATCC 39315 / El Tor Inaba N16961), this protein is Probable oxaloacetate decarboxylase gamma chain 2 (oadG2).